The chain runs to 486 residues: UDP-N-acetylmuramate--L-alanine ligase (486 aa).

126–132 (GTHGKTS) is an ATP binding site.

The protein belongs to the MurCDEF family.

It is found in the cytoplasm. It carries out the reaction UDP-N-acetyl-alpha-D-muramate + L-alanine + ATP = UDP-N-acetyl-alpha-D-muramoyl-L-alanine + ADP + phosphate + H(+). It participates in cell wall biogenesis; peptidoglycan biosynthesis. In terms of biological role, cell wall formation. The sequence is that of UDP-N-acetylmuramate--L-alanine ligase from Corynebacterium glutamicum (strain R).